A 255-amino-acid polypeptide reads, in one-letter code: MSNRLKNEVIAITGGGAGIGLAIASAALREGAKVALIDLDQGLAERSAAMLSTGGAVAKGFGADVTKAADITAAITSAEQTIGSLTGLVNNAGIAGFGSVHDADAAAWDRIMAVNVTGTFLASKAALAGMLERHKGTIVNFGSVAGLVGIPTMAAYCAAKGAIVNLTRQMAADYSGRGVRVNAVCPGTVTSTGMGQQLLGSDTSPEVQARRLAKYPIGRFGTPEDIAEAVIFLLSDQAAFVTGAAFAVDGGMTAI.

Residues isoleucine 19, aspartate 38, 64-65 (DV), and asparagine 91 contribute to the NAD(+) site. Serine 143 and tyrosine 156 together coordinate (S)-2-hydroxypropyl-coenzyme M. Tyrosine 156 (proton acceptor) is an active-site residue. Lysine 160 contacts NAD(+). Position 188 (threonine 188) interacts with (S)-2-hydroxypropyl-coenzyme M. NAD(+) is bound at residue 189–193 (VTSTG). Tyrosine 215 provides a ligand contact to (S)-2-hydroxypropyl-coenzyme M.

Belongs to the short-chain dehydrogenases/reductases (SDR) family. In terms of assembly, homotetramer.

It carries out the reaction (S)-2-hydroxypropyl-coenzyme M + NAD(+) = 2-oxopropyl-coenzyme M + NADH + H(+). With respect to regulation, not inhibited by 2-(2-methyl-2-hydroxypropylthio)ethanesulfonate (M-HPC), an achiral analog of both R-HPC and S-HPC. Functionally, involved in aliphatic epoxide carboxylation. Catalyzes the reversible oxidation of (2S)-2-hydroxypropyl-coenzyme M (S-HPC) to 2-oxopropyl-coenzyme M (2-KPC). The enzyme is highly specific for the S enantiomers. In vitro can also use the aliphatic ketone 2-butanone and the aliphatic alcohol 2-propanol, and shows an inherent stereoselectivity for 2-butanone reduction. The chain is 2-(S)-hydroxypropyl-CoM dehydrogenase 3 from Xanthobacter autotrophicus (strain ATCC BAA-1158 / Py2).